The primary structure comprises 396 residues: Ribosomal RNA large subunit methyltransferase I (396 aa).

Residues 2-81 (SVRLVLAKGR…ESIDIAFFSR (80 aa)) enclose the PUA domain.

This sequence belongs to the methyltransferase superfamily. RlmI family.

It is found in the cytoplasm. The enzyme catalyses cytidine(1962) in 23S rRNA + S-adenosyl-L-methionine = 5-methylcytidine(1962) in 23S rRNA + S-adenosyl-L-homocysteine + H(+). In terms of biological role, specifically methylates the cytosine at position 1962 (m5C1962) of 23S rRNA. In Shigella boydii serotype 18 (strain CDC 3083-94 / BS512), this protein is Ribosomal RNA large subunit methyltransferase I.